The primary structure comprises 336 residues: Aspartate carbamoyltransferase catalytic subunit (336 aa).

Residues Arg-72 and Thr-73 each contribute to the carbamoyl phosphate site. Lys-100 contributes to the L-aspartate binding site. The carbamoyl phosphate site is built by Arg-122, His-155, and Gln-158. 2 residues coordinate L-aspartate: Arg-188 and Arg-242. Gly-288 and Pro-289 together coordinate carbamoyl phosphate.

The protein belongs to the aspartate/ornithine carbamoyltransferase superfamily. ATCase family. As to quaternary structure, heterododecamer (2C3:3R2) of six catalytic PyrB chains organized as two trimers (C3), and six regulatory PyrI chains organized as three dimers (R2).

It catalyses the reaction carbamoyl phosphate + L-aspartate = N-carbamoyl-L-aspartate + phosphate + H(+). It participates in pyrimidine metabolism; UMP biosynthesis via de novo pathway; (S)-dihydroorotate from bicarbonate: step 2/3. Catalyzes the condensation of carbamoyl phosphate and aspartate to form carbamoyl aspartate and inorganic phosphate, the committed step in the de novo pyrimidine nucleotide biosynthesis pathway. The sequence is that of Aspartate carbamoyltransferase catalytic subunit from Lactobacillus leichmannii.